A 181-amino-acid polypeptide reads, in one-letter code: ATP synthase subunit b (181 aa).

A helical transmembrane segment spans residues 24–44 (LFPNLPNFIAHLLATIVLVIV).

Belongs to the ATPase B chain family. In terms of assembly, F-type ATPases have 2 components, F(1) - the catalytic core - and F(0) - the membrane proton channel. F(1) has five subunits: alpha(3), beta(3), gamma(1), delta(1), epsilon(1). F(0) has three main subunits: a(1), b(2) and c(10-14). The alpha and beta chains form an alternating ring which encloses part of the gamma chain. F(1) is attached to F(0) by a central stalk formed by the gamma and epsilon chains, while a peripheral stalk is formed by the delta and b chains.

The protein localises to the cell membrane. Its function is as follows. F(1)F(0) ATP synthase produces ATP from ADP in the presence of a proton or sodium gradient. F-type ATPases consist of two structural domains, F(1) containing the extramembraneous catalytic core and F(0) containing the membrane proton channel, linked together by a central stalk and a peripheral stalk. During catalysis, ATP synthesis in the catalytic domain of F(1) is coupled via a rotary mechanism of the central stalk subunits to proton translocation. Component of the F(0) channel, it forms part of the peripheral stalk, linking F(1) to F(0). The protein is ATP synthase subunit b of Mycoplasma capricolum subsp. capricolum (strain California kid / ATCC 27343 / NCTC 10154).